We begin with the raw amino-acid sequence, 274 residues long: Bis(5'-nucleosyl)-tetraphosphatase, symmetrical (274 aa).

This sequence belongs to the Ap4A hydrolase family.

The enzyme catalyses P(1),P(4)-bis(5'-adenosyl) tetraphosphate + H2O = 2 ADP + 2 H(+). Hydrolyzes diadenosine 5',5'''-P1,P4-tetraphosphate to yield ADP. This is Bis(5'-nucleosyl)-tetraphosphatase, symmetrical from Buchnera aphidicola subsp. Acyrthosiphon pisum (strain Tuc7).